A 218-amino-acid polypeptide reads, in one-letter code: uncharacterized protein (218 aa).

The next 5 helical transmembrane spans lie at 27 to 49, 57 to 77, 115 to 135, 142 to 162, and 180 to 200; these read IALENAGIPIPGETITLLGGFLA, GGVLIAAIAGAVLGDSCGYWV, VFFGRFVTLLRIFAGPMAGIV, FLLYNIGGASVWAAITVSLAY, and FSWFALAAVVGMVGIYFVFHF.

Belongs to the DedA family.

It localises to the cell membrane. This is an uncharacterized protein from Synechocystis sp. (strain ATCC 27184 / PCC 6803 / Kazusa).